Reading from the N-terminus, the 224-residue chain is Cytochrome c oxidase subunit 2 (224 aa).

Topologically, residues 1–26 are mitochondrial intermembrane; it reads MSTWGQINLMDPASPIQMEMMLFHDH. Residues 27–48 traverse the membrane as a helical segment; the sequence is AMAILIGIFTLVSLLGVKLCFN. Over 49–62 the chain is Mitochondrial matrix; that stretch reads TLSTRTMHEAQLLE. Residues 63–82 traverse the membrane as a helical segment; it reads TLWTILPAFLLVWLALPSLR. At 83 to 224 the chain is on the mitochondrial intermembrane side; it reads LLYLLDEQGS…DVKDFIKMCN (142 aa). His161, Cys196, Glu198, Cys200, His204, and Met207 together coordinate Cu cation. Position 198 (Glu198) interacts with Mg(2+).

It belongs to the cytochrome c oxidase subunit 2 family. In terms of assembly, component of the cytochrome c oxidase (complex IV, CIV), a multisubunit enzyme composed of a catalytic core of 3 subunits and several supernumerary subunits. The complex exists as a monomer or a dimer and forms supercomplexes (SCs) in the inner mitochondrial membrane with ubiquinol-cytochrome c oxidoreductase (cytochrome b-c1 complex, complex III, CIII). Requires Cu cation as cofactor.

The protein localises to the mitochondrion inner membrane. The catalysed reaction is 4 Fe(II)-[cytochrome c] + O2 + 8 H(+)(in) = 4 Fe(III)-[cytochrome c] + 2 H2O + 4 H(+)(out). In terms of biological role, component of the cytochrome c oxidase, the last enzyme in the mitochondrial electron transport chain which drives oxidative phosphorylation. The respiratory chain contains 3 multisubunit complexes succinate dehydrogenase (complex II, CII), ubiquinol-cytochrome c oxidoreductase (cytochrome b-c1 complex, complex III, CIII) and cytochrome c oxidase (complex IV, CIV), that cooperate to transfer electrons derived from NADH and succinate to molecular oxygen, creating an electrochemical gradient over the inner membrane that drives transmembrane transport and the ATP synthase. Cytochrome c oxidase is the component of the respiratory chain that catalyzes the reduction of oxygen to water. Electrons originating from reduced cytochrome c in the intermembrane space (IMS) are transferred via the dinuclear copper A center (CU(A)) of subunit 2 and heme A of subunit 1 to the active site in subunit 1, a binuclear center (BNC) formed by heme A3 and copper B (CU(B)). The BNC reduces molecular oxygen to 2 water molecules using 4 electrons from cytochrome c in the IMS and 4 protons from the mitochondrial matrix. This Albinaria caerulea (Land snail) protein is Cytochrome c oxidase subunit 2 (COII).